Consider the following 161-residue polypeptide: 2-C-methyl-D-erythritol 2,4-cyclodiphosphate synthase (161 aa).

Aspartate 10 and histidine 12 together coordinate a divalent metal cation. Residues aspartate 10–histidine 12 and histidine 36–serine 37 contribute to the 4-CDP-2-C-methyl-D-erythritol 2-phosphate site. Position 44 (histidine 44) interacts with a divalent metal cation. Residues aspartate 58 to glycine 60, phenylalanine 63 to aspartate 67, alanine 102 to alanine 108, threonine 134 to glutamate 137, phenylalanine 141, and arginine 144 contribute to the 4-CDP-2-C-methyl-D-erythritol 2-phosphate site.

Belongs to the IspF family. In terms of assembly, homotrimer. Requires a divalent metal cation as cofactor.

It catalyses the reaction 4-CDP-2-C-methyl-D-erythritol 2-phosphate = 2-C-methyl-D-erythritol 2,4-cyclic diphosphate + CMP. It functions in the pathway isoprenoid biosynthesis; isopentenyl diphosphate biosynthesis via DXP pathway; isopentenyl diphosphate from 1-deoxy-D-xylulose 5-phosphate: step 4/6. In terms of biological role, involved in the biosynthesis of isopentenyl diphosphate (IPP) and dimethylallyl diphosphate (DMAPP), two major building blocks of isoprenoid compounds. Catalyzes the conversion of 4-diphosphocytidyl-2-C-methyl-D-erythritol 2-phosphate (CDP-ME2P) to 2-C-methyl-D-erythritol 2,4-cyclodiphosphate (ME-CPP) with a corresponding release of cytidine 5-monophosphate (CMP). This is 2-C-methyl-D-erythritol 2,4-cyclodiphosphate synthase from Shewanella sediminis (strain HAW-EB3).